Consider the following 359-residue polypeptide: Peptide chain release factor 1 (359 aa).

Glutamine 234 carries the post-translational modification N5-methylglutamine. Positions 283-305 (SQKDAARAADRRAQVGSGDRSER) are disordered.

Belongs to the prokaryotic/mitochondrial release factor family. Post-translationally, methylated by PrmC. Methylation increases the termination efficiency of RF1.

The protein resides in the cytoplasm. Functionally, peptide chain release factor 1 directs the termination of translation in response to the peptide chain termination codons UAG and UAA. The polypeptide is Peptide chain release factor 1 (Methylobacterium nodulans (strain LMG 21967 / CNCM I-2342 / ORS 2060)).